A 134-amino-acid chain; its full sequence is Profilin-3 (134 aa).

A disulfide bridge connects residues Cys13 and Cys118. Residues 84–100 (AVIRGKKGSGGITIKKT) carry the Involved in PIP2 interaction motif. The residue at position 114 (Thr114) is a Phosphothreonine.

The protein belongs to the profilin family. In terms of assembly, occurs in many kinds of cells as a complex with monomeric actin in a 1:1 ratio. In terms of processing, phosphorylated by MAP kinases.

Its subcellular location is the cytoplasm. The protein resides in the cytoskeleton. Functionally, binds to actin and affects the structure of the cytoskeleton. At high concentrations, profilin prevents the polymerization of actin, whereas it enhances it at low concentrations. This is Profilin-3 from Olea europaea (Common olive).